Reading from the N-terminus, the 331-residue chain is Fructose-1,6-bisphosphatase class 1 (331 aa).

Mg(2+) is bound by residues Glu88, Asp108, Leu110, and Asp111. Residues 111 to 114 and Asn201 each bind substrate; that span reads DGSS. Glu273 lines the Mg(2+) pocket.

The protein belongs to the FBPase class 1 family. As to quaternary structure, homotetramer. Mg(2+) is required as a cofactor.

It is found in the cytoplasm. The catalysed reaction is beta-D-fructose 1,6-bisphosphate + H2O = beta-D-fructose 6-phosphate + phosphate. It functions in the pathway carbohydrate biosynthesis; gluconeogenesis. The protein is Fructose-1,6-bisphosphatase class 1 of Methylobacillus flagellatus (strain ATCC 51484 / DSM 6875 / VKM B-1610 / KT).